We begin with the raw amino-acid sequence, 111 residues long: MIQVLLVIICLAVFPYQGSSIILESGNVNDFELVYPKKVTVLPTGAMNSAHPCCDPVTCKPKRGEHCISGPCCRNCKFLSPGTICKKAKGDDMNDYCTGISSDCPRNPWKD.

The signal sequence occupies residues 1-20 (MIQVLLVIICLAVFPYQGSS). The propeptide occupies 21–46 (IILESGNVNDFELVYPKKVTVLPTGA). A Disintegrin domain is found at 47-111 (MNSAHPCCDP…SDCPRNPWKD (65 aa)). Intrachain disulfides connect Cys-53/Cys-76, Cys-67/Cys-73, Cys-72/Cys-97, and Cys-85/Cys-104. The Cell attachment site motif lies at 89–91 (KGD).

It belongs to the disintegrin family. Dimeric disintegrin subfamily. In terms of assembly, heterodimer with subunit beta; disulfide-linked. Expressed by the venom gland.

It localises to the secreted. In terms of biological role, inhibits ADP-induced human platelet aggregation. Antagonist of alpha-IIb/beta-3 (ITGA2B/ITGB3). The polypeptide is Disintegrin CV-11-alpha (Cerastes vipera (Sahara sand viper)).